A 255-amino-acid chain; its full sequence is MSNLGQFDSDFYQSNYTIDNQEQTCNDSNACGNLYGSRKQQASEQPQPAFVPAEMLASSGYSGQFFQPASNQDYYSPSSYIDSFEEEPPLLEELGINFDHIWQKTLTVLNPMKPADGSIMNETDLTGPILFCMALGATLLLAGKVQFGYVYGMSAIGCLGIHALLNLMSSSGVSYGCVASVLGYCLLPMVILSSCAIFFSLQGTFGTVSALVIIGWCSLSASKIFTSALAMEGQQLLIAYPCALLYGLFALVTVF.

Topologically, residues 1 to 124 are cytoplasmic; that stretch reads MSNLGQFDSD…ADGSIMNETD (124 aa). A helical transmembrane segment spans residues 125-145; it reads LTGPILFCMALGATLLLAGKV. A topological domain (lumenal) is located at residue Q146. The helical transmembrane segment at 147 to 167 threads the bilayer; that stretch reads FGYVYGMSAIGCLGIHALLNL. Topologically, residues 168–180 are cytoplasmic; the sequence is MSSSGVSYGCVAS. The chain crosses the membrane as a helical span at residues 181–201; that stretch reads VLGYCLLPMVILSSCAIFFSL. Topologically, residues 202–204 are lumenal; it reads QGT. Residues 205–225 form a helical membrane-spanning segment; the sequence is FGTVSALVIIGWCSLSASKIF. The Cytoplasmic segment spans residues 226 to 234; it reads TSALAMEGQ. The chain crosses the membrane as a helical span at residues 235–255; sequence QLLIAYPCALLYGLFALVTVF.

The protein belongs to the YIP1 family.

Its subcellular location is the endoplasmic reticulum membrane. The protein resides in the golgi apparatus. It is found in the cis-Golgi network membrane. The protein localises to the trans-Golgi network membrane. The protein is Protein YIPF7 (YIPF7) of Bos taurus (Bovine).